The sequence spans 278 residues: 4-deoxy-L-threo-5-hexosulose-uronate ketol-isomerase (278 aa).

His-196, His-198, Glu-203, and His-245 together coordinate Zn(2+).

Belongs to the KduI family. Homohexamer. It depends on Zn(2+) as a cofactor.

It carries out the reaction 5-dehydro-4-deoxy-D-glucuronate = 3-deoxy-D-glycero-2,5-hexodiulosonate. It functions in the pathway glycan metabolism; pectin degradation; 2-dehydro-3-deoxy-D-gluconate from pectin: step 4/5. Functionally, catalyzes the isomerization of 5-dehydro-4-deoxy-D-glucuronate to 3-deoxy-D-glycero-2,5-hexodiulosonate. The protein is 4-deoxy-L-threo-5-hexosulose-uronate ketol-isomerase of Escherichia coli O139:H28 (strain E24377A / ETEC).